Consider the following 250-residue polypeptide: MAFSASDVLVLIPARLAASRLPGKPLADVGGRPMIVEVARRAVAAGIGRVAVATDAVEIADAVRAAGFEAVMTRADHPSGSDRIFEALGVLDPDGAVQVVVNVQGDLPTIAPETIRAALVPLEEGPADIATLTAVITEEGERTDPNVVKVVGTPIGENRLRALYFTRATAPTGEGPLYHHIGLYAYRRAALERFVSLPPSPLEKRERLEQLRALEAGMRIDVAVVDAVPLGVDTPEHLERARALLASNDN.

Belongs to the KdsB family.

It is found in the cytoplasm. It carries out the reaction 3-deoxy-alpha-D-manno-oct-2-ulosonate + CTP = CMP-3-deoxy-beta-D-manno-octulosonate + diphosphate. It participates in nucleotide-sugar biosynthesis; CMP-3-deoxy-D-manno-octulosonate biosynthesis; CMP-3-deoxy-D-manno-octulosonate from 3-deoxy-D-manno-octulosonate and CTP: step 1/1. Its pathway is bacterial outer membrane biogenesis; lipopolysaccharide biosynthesis. Functionally, activates KDO (a required 8-carbon sugar) for incorporation into bacterial lipopolysaccharide in Gram-negative bacteria. The protein is 3-deoxy-manno-octulosonate cytidylyltransferase of Azorhizobium caulinodans (strain ATCC 43989 / DSM 5975 / JCM 20966 / LMG 6465 / NBRC 14845 / NCIMB 13405 / ORS 571).